The chain runs to 190 residues: Adenylate kinase (190 aa).

Residue 11 to 16 (GAGKGT) participates in ATP binding. Positions 31–60 (STGDIFRFNIKNETELGKLAKTFMDKGDLV) are NMP. Residues Thr32, Arg37, 58 to 60 (DLV), 86 to 89 (GFPR), and Gln93 each bind AMP. Positions 127 to 137 (ERGKTSGRVDD) are LID. Arg128 serves as a coordination point for ATP. Positions 134 and 146 each coordinate AMP. Residue Gly174 coordinates ATP.

Belongs to the adenylate kinase family. Monomer.

The protein resides in the cytoplasm. The catalysed reaction is AMP + ATP = 2 ADP. Its pathway is purine metabolism; AMP biosynthesis via salvage pathway; AMP from ADP: step 1/1. Functionally, catalyzes the reversible transfer of the terminal phosphate group between ATP and AMP. Plays an important role in cellular energy homeostasis and in adenine nucleotide metabolism. This chain is Adenylate kinase, found in Flavobacterium psychrophilum (strain ATCC 49511 / DSM 21280 / CIP 103535 / JIP02/86).